We begin with the raw amino-acid sequence, 198 residues long: HTH-type transcriptional regulator BetI (198 aa).

The HTH tetR-type domain maps to 8-68; it reads PLRRRELIDA…ATMRHLLREL (61 aa). The segment at residues 31–50 is a DNA-binding region (H-T-H motif); it reads TVAQIAHEAGVSPALAHHYF.

The protein operates within amine and polyamine biosynthesis; betaine biosynthesis via choline pathway [regulation]. In terms of biological role, repressor involved in the biosynthesis of the osmoprotectant glycine betaine. It represses transcription of the choline transporter BetT and the genes of BetAB involved in the synthesis of glycine betaine. The polypeptide is HTH-type transcriptional regulator BetI (Brucella melitensis biotype 2 (strain ATCC 23457)).